A 303-amino-acid polypeptide reads, in one-letter code: Flavin-dependent thymidylate synthase (303 aa).

The interval 1–21 (MALTSEQRAEIEAQRSEPQLT) is disordered. The ThyX domain occupies 43–256 (GFLRVVDYMG…PATAAAFEEY (214 aa)). FAD is bound by residues T89, 112–114 (RHR), and E120. DUMP contacts are provided by residues 109–112 (QWIR), 120–124 (EYSAR), and R195. A ThyX motif motif is present at residues 112-122 (RHRMASVNEYS). FAD is bound by residues 211-213 (DLH) and H217. R222 contributes to the dUMP binding site. Catalysis depends on R222, which acts as the Involved in ionization of N3 of dUMP, leading to its activation.

This sequence belongs to the thymidylate synthase ThyX family. Homotetramer. It depends on FAD as a cofactor.

It carries out the reaction dUMP + (6R)-5,10-methylene-5,6,7,8-tetrahydrofolate + NADPH + H(+) = dTMP + (6S)-5,6,7,8-tetrahydrofolate + NADP(+). It participates in pyrimidine metabolism; dTTP biosynthesis. Catalyzes the reductive methylation of 2'-deoxyuridine-5'-monophosphate (dUMP) to 2'-deoxythymidine-5'-monophosphate (dTMP) while utilizing 5,10-methylenetetrahydrofolate (mTHF) as the methyl donor, and NADPH and FADH(2) as the reductant. The protein is Flavin-dependent thymidylate synthase of Gluconobacter oxydans (strain 621H) (Gluconobacter suboxydans).